The sequence spans 410 residues: Tryptophan synthase beta chain (410 aa).

N6-(pyridoxal phosphate)lysine is present on K104.

Belongs to the TrpB family. Tetramer of two alpha and two beta chains. It depends on pyridoxal 5'-phosphate as a cofactor.

The catalysed reaction is (1S,2R)-1-C-(indol-3-yl)glycerol 3-phosphate + L-serine = D-glyceraldehyde 3-phosphate + L-tryptophan + H2O. It functions in the pathway amino-acid biosynthesis; L-tryptophan biosynthesis; L-tryptophan from chorismate: step 5/5. The beta subunit is responsible for the synthesis of L-tryptophan from indole and L-serine. This Thermosynechococcus vestitus (strain NIES-2133 / IAM M-273 / BP-1) protein is Tryptophan synthase beta chain.